Consider the following 510-residue polypeptide: UDP-N-acetylmuramoylalanine--D-glutamate ligase (510 aa).

138–144 (GTNGKTT) is a binding site for ATP. The segment at 294 to 316 (FDEPAPAPRRKKDAPPPTRAGGR) is disordered.

The protein belongs to the MurCDEF family.

The protein resides in the cytoplasm. The catalysed reaction is UDP-N-acetyl-alpha-D-muramoyl-L-alanine + D-glutamate + ATP = UDP-N-acetyl-alpha-D-muramoyl-L-alanyl-D-glutamate + ADP + phosphate + H(+). Its pathway is cell wall biogenesis; peptidoglycan biosynthesis. Functionally, cell wall formation. Catalyzes the addition of glutamate to the nucleotide precursor UDP-N-acetylmuramoyl-L-alanine (UMA). This chain is UDP-N-acetylmuramoylalanine--D-glutamate ligase, found in Bordetella pertussis (strain Tohama I / ATCC BAA-589 / NCTC 13251).